A 128-amino-acid chain; its full sequence is UPF0325 protein YaeH (128 aa).

The protein belongs to the UPF0325 family.

The sequence is that of UPF0325 protein YaeH from Escherichia coli (strain ATCC 8739 / DSM 1576 / NBRC 3972 / NCIMB 8545 / WDCM 00012 / Crooks).